The chain runs to 117 residues: uncharacterized protein (117 aa).

This is an uncharacterized protein from Fowlpox virus (strain NVSL) (FPV).